Consider the following 125-residue polypeptide: Large ribosomal subunit protein bL12 (125 aa).

Belongs to the bacterial ribosomal protein bL12 family. In terms of assembly, homodimer. Part of the ribosomal stalk of the 50S ribosomal subunit. Forms a multimeric L10(L12)X complex, where L10 forms an elongated spine to which 2 to 4 L12 dimers bind in a sequential fashion. Binds GTP-bound translation factors.

In terms of biological role, forms part of the ribosomal stalk which helps the ribosome interact with GTP-bound translation factors. Is thus essential for accurate translation. The protein is Large ribosomal subunit protein bL12 of Polaromonas naphthalenivorans (strain CJ2).